A 217-amino-acid polypeptide reads, in one-letter code: MPSCPPAYSEQVRGDGDGWVVSDSGVAYWGRYGAAGLLLRAPRPDGTPAVLLQHRALWSHQGGTWGLPGGARDSHETPEQTAVRESSEEAGLSAERLEVRATVVTAEVCGVDDTHWTYTTVVADAGELLDTVPNRESAELRWVAENEVADLPLHPGFAASWQRLRTAPATVPLARCDERRQRLPRTIQIEAGVFLWCTPGDADQAPSPLGRRISSLL.

The Nudix hydrolase domain maps to 30–164; the sequence is GRYGAAGLLL…PGFAASWQRL (135 aa). A disordered region spans residues 67–92; it reads LPGGARDSHETPEQTAVRESSEEAGL. Mg(2+) is bound by residues Gly70, Glu85, Glu88, and Glu89. The Nudix box signature appears at 70-91; the sequence is GARDSHETPEQTAVRESSEEAG.

This sequence belongs to the Nudix hydrolase family. Requires Mg(2+) as cofactor. The cofactor is Mn(2+).

It carries out the reaction 8-oxo-dGTP + H2O = 8-oxo-dGMP + diphosphate + H(+). Its function is as follows. May be involved in the GO system responsible for removing an oxidatively damaged form of guanine (7,8-dihydro-8-oxoguanine, 8-oxo-dGTP) from DNA and the nucleotide pool. 8-oxo-dGTP is inserted opposite dA and dC residues of template DNA with almost equal efficiency thus leading to A.T to G.C transversions. MutT specifically degrades 8-oxo-dGTP to the monophosphate. In Mycobacterium tuberculosis (strain CDC 1551 / Oshkosh), this protein is Putative 8-oxo-dGTP diphosphatase 3 (mutT3).